A 210-amino-acid polypeptide reads, in one-letter code: Peptidyl-tRNA hydrolase (210 aa).

Tyrosine 15 is a binding site for tRNA. The Proton acceptor role is filled by histidine 20. TRNA-binding residues include phenylalanine 66, asparagine 68, and asparagine 114. Residues 186-210 (IHTSKPPRPKPPRREPGDGGTPATA) are disordered.

This sequence belongs to the PTH family. In terms of assembly, monomer.

It localises to the cytoplasm. It catalyses the reaction an N-acyl-L-alpha-aminoacyl-tRNA + H2O = an N-acyl-L-amino acid + a tRNA + H(+). In terms of biological role, hydrolyzes ribosome-free peptidyl-tRNAs (with 1 or more amino acids incorporated), which drop off the ribosome during protein synthesis, or as a result of ribosome stalling. Functionally, catalyzes the release of premature peptidyl moieties from peptidyl-tRNA molecules trapped in stalled 50S ribosomal subunits, and thus maintains levels of free tRNAs and 50S ribosomes. In Variovorax paradoxus (strain S110), this protein is Peptidyl-tRNA hydrolase.